The sequence spans 349 residues: Cobalt-precorrin-5B C(1)-methyltransferase (349 aa).

The protein belongs to the CbiD family.

The catalysed reaction is Co-precorrin-5B + S-adenosyl-L-methionine = Co-precorrin-6A + S-adenosyl-L-homocysteine. Its pathway is cofactor biosynthesis; adenosylcobalamin biosynthesis; cob(II)yrinate a,c-diamide from sirohydrochlorin (anaerobic route): step 6/10. Catalyzes the methylation of C-1 in cobalt-precorrin-5B to form cobalt-precorrin-6A. The protein is Cobalt-precorrin-5B C(1)-methyltransferase of Saccharolobus islandicus (strain M.16.27) (Sulfolobus islandicus).